The primary structure comprises 306 residues: MAAVDDLQFEEFGNAATSLTANPDATTVNIEDPGETPKHQSGSPRGSGREEDDELLGNDDSDKTELLAGQKKSSPFWTFEYYQTFFDVDTYQVFDRIKGSLLPIPGKNFVRLYIRSNPDLYGPFWICATLVFAIAISGNLSNFLIHLGEKTYRYVPEFRKVSIAATTIYAYAWLVPLALWGFLMWRNSKVMNIVSYSFLEIVCVYGYSLFIYIPTAILWIIPQKAVRWILVMIALGISGSVLAMTFWPAVREDNRRVALATIVTIVLLHMLLSVGCLAYFFDAPEMDHLPTTTATPNQTVAAAKSS.

Topologically, residues 1–119 (MAAVDDLQFE…VRLYIRSNPD (119 aa)) are cytoplasmic. The interval 14–62 (NAATSLTANPDATTVNIEDPGETPKHQSGSPRGSGREEDDELLGNDDSD) is disordered. Over residues 15-29 (AATSLTANPDATTVN) the composition is skewed to polar residues. The segment covering 50-59 (EEDDELLGND) has biased composition (acidic residues). Residues 120–140 (LYGPFWICATLVFAIAISGNL) traverse the membrane as a helical segment. Residues 141 to 162 (SNFLIHLGEKTYRYVPEFRKVS) are Lumenal-facing. The chain crosses the membrane as a helical span at residues 163 to 183 (IAATTIYAYAWLVPLALWGFL). The Cytoplasmic segment spans residues 184–200 (MWRNSKVMNIVSYSFLE). A helical membrane pass occupies residues 201-221 (IVCVYGYSLFIYIPTAILWII). The Lumenal portion of the chain corresponds to 222-227 (PQKAVR). Residues 228-248 (WILVMIALGISGSVLAMTFWP) form a helical membrane-spanning segment. Over 249–256 (AVREDNRR) the chain is Cytoplasmic. Residues 257-277 (VALATIVTIVLLHMLLSVGCL) form a helical membrane-spanning segment. Residues 278–306 (AYFFDAPEMDHLPTTTATPNQTVAAAKSS) lie on the Lumenal side of the membrane. The N-linked (GlcNAc...) asparagine glycan is linked to asparagine 297.

Belongs to the YIP1 family. In terms of assembly, interacts with YIPF6; this interaction may stabilize YIPF1. May also form a ternary complex with YIPF2 and YIPF6.

It localises to the golgi apparatus. The protein localises to the cis-Golgi network membrane. It is found in the trans-Golgi network membrane. The protein resides in the late endosome membrane. The chain is Protein YIPF1 (YIPF1) from Pongo abelii (Sumatran orangutan).